Here is a 159-residue protein sequence, read N- to C-terminus: Transcriptional repressor NrdR (159 aa).

A zinc finger spans residues 3–34 (CPYCQSEDTQVKDSRPAEDGAAIRRRRVCPDC). In terms of domain architecture, ATP-cone spans 49–139 (LVVVKKSGRK…VYRNFREAKD (91 aa)).

This sequence belongs to the NrdR family. Zn(2+) is required as a cofactor.

Its function is as follows. Negatively regulates transcription of bacterial ribonucleotide reductase nrd genes and operons by binding to NrdR-boxes. This is Transcriptional repressor NrdR from Mesorhizobium japonicum (strain LMG 29417 / CECT 9101 / MAFF 303099) (Mesorhizobium loti (strain MAFF 303099)).